The sequence spans 268 residues: Tryptophan synthase alpha chain (268 aa).

Catalysis depends on proton acceptor residues glutamate 49 and aspartate 60.

This sequence belongs to the TrpA family. Tetramer of two alpha and two beta chains.

The enzyme catalyses (1S,2R)-1-C-(indol-3-yl)glycerol 3-phosphate + L-serine = D-glyceraldehyde 3-phosphate + L-tryptophan + H2O. It functions in the pathway amino-acid biosynthesis; L-tryptophan biosynthesis; L-tryptophan from chorismate: step 5/5. In terms of biological role, the alpha subunit is responsible for the aldol cleavage of indoleglycerol phosphate to indole and glyceraldehyde 3-phosphate. In Vibrio vulnificus (strain CMCP6), this protein is Tryptophan synthase alpha chain.